We begin with the raw amino-acid sequence, 55 residues long: Large ribosomal subunit protein bL33 (55 aa).

This sequence belongs to the bacterial ribosomal protein bL33 family.

In Methylobacterium radiotolerans (strain ATCC 27329 / DSM 1819 / JCM 2831 / NBRC 15690 / NCIMB 10815 / 0-1), this protein is Large ribosomal subunit protein bL33.